The chain runs to 659 residues: RNA-binding E3 ubiquitin-protein ligase MEX3C (659 aa).

Residues methionine 1–proline 15 are compositionally biased toward low complexity. The tract at residues methionine 1 to serine 140 is disordered. Residues alanine 16–glycine 37 show a composition bias toward pro residues. Residues glutamate 64–arginine 82 are compositionally biased toward low complexity. Positions arginine 83–proline 94 are enriched in basic and acidic residues. Phosphoserine is present on serine 88. Residues alanine 104 to aspartate 137 are compositionally biased toward acidic residues. KH domains are found at residues threonine 232–isoleucine 293 and glutamine 326–isoleucine 387. Residues phenylalanine 513–asparagine 569 form a disordered region. Residues proline 526–leucine 544 are compositionally biased toward polar residues. Residues serine 537 and serine 545 each carry the phosphoserine modification. The segment covering serine 551–serine 562 has biased composition (basic and acidic residues). An RING-type zinc finger spans residues cysteine 608–glutamine 648.

In terms of assembly, interacts with USP7, which antagonizes the ability to degrade mRNA. Highest levels found in fetal brain and testis. Also expressed in thymus, salivary gland and uterus. Highly expressed in cells of the innate immune system, in particular activated NK cells. Week expression in the intestine.

The protein localises to the cytoplasm. It is found in the nucleus. The enzyme catalyses S-ubiquitinyl-[E2 ubiquitin-conjugating enzyme]-L-cysteine + [acceptor protein]-L-lysine = [E2 ubiquitin-conjugating enzyme]-L-cysteine + N(6)-ubiquitinyl-[acceptor protein]-L-lysine.. In terms of biological role, E3 ubiquitin ligase responsible for the post-transcriptional regulation of common HLA-A allotypes. Binds to the 3' UTR of HLA-A2 mRNA, and regulates its levels by promoting mRNA decay. RNA binding is sufficient to prevent translation, but ubiquitin ligase activity is required for mRNA degradation. In Homo sapiens (Human), this protein is RNA-binding E3 ubiquitin-protein ligase MEX3C (MEX3C).